The chain runs to 391 residues: UPF0229 protein CA_C0580 (391 aa).

Disordered stretches follow at residues 1 to 20 and 75 to 109; these read MAIF…TIGD and VGSG…NSEG. Residues 96-106 show a composition bias toward gly residues; sequence GSKGKGKGAGN.

Belongs to the UPF0229 family.

This chain is UPF0229 protein CA_C0580, found in Clostridium acetobutylicum (strain ATCC 824 / DSM 792 / JCM 1419 / IAM 19013 / LMG 5710 / NBRC 13948 / NRRL B-527 / VKM B-1787 / 2291 / W).